The primary structure comprises 247 residues: Fasciclin-like arabinogalactan protein 6 (247 aa).

The first 23 residues, 1–23 (MSSSLFSYVVLLIFLFTIPYIQS), serve as a signal peptide directing secretion. Residues 36–182 (PINLTAILEA…LAVYVVDSVL (147 aa)) enclose the FAS1 domain. N-linked (GlcNAc...) asparagine glycosylation is found at asparagine 38, asparagine 57, asparagine 70, asparagine 142, and asparagine 153. The segment covering 192–212 (TTPTGAPAPKSSTSSSDADSP) has biased composition (low complexity). A disordered region spans residues 192–221 (TTPTGAPAPKSSTSSSDADSPAADDEHKSA). Glycine 222 carries the GPI-anchor amidated glycine lipid modification. A propeptide spans 223–247 (SSVKRTSLGIVVSFALFCCSVIYIA) (removed in mature form).

This sequence belongs to the fasciclin-like AGP family.

It is found in the cell membrane. Its function is as follows. May be a cell surface adhesion protein. The protein is Fasciclin-like arabinogalactan protein 6 (FLA6) of Arabidopsis thaliana (Mouse-ear cress).